Consider the following 352-residue polypeptide: MAPKLITVLCLGFCLNQKICPHAGAQDKFSLSAWPSPVVPLGGRVTLSCHSHLRFVIWTIFQTTGTRSHELHTGLSNNITISPVTPEHAGTYRCVGIYKHASKWSAESNSLKIIVTGLFTKPSISAHPSSLVHAGARVSLRCHSELAFDEFILYKEGHIQHSQQLDQGMEAGIHYVEAVFSMGPVTPAHAGAYRCCGCFSHSRYEWSAPSDPLDIVITGKYKKPSLSTQVDPMMRLGEKLTLFCSSEISFDQYHLFRHGVAHGQWLSGGQRHREAFQANFSVGRATPVPGGTYRCYGSFNDSPYKPPVTRCNFTPQETLRVLLCHSQNPPLNLTHLALKDSPATCICSLDSQ.

The signal sequence occupies residues 1–16 (MAPKLITVLCLGFCLN). 2 Ig-like C2-type domains span residues 17–112 (QKIC…NSLK) and 224–311 (PSLS…VTRC). Cystine bridges form between C49-C94 and C244-C295. An N-linked (GlcNAc...) asparagine glycan is attached at N78.

As to expression, expressed in NK-cells.

It localises to the secreted. The polypeptide is Putative killer cell immunoglobulin-like receptor-like protein KIR3DX1 (KIR3DX1) (Homo sapiens (Human)).